The following is a 206-amino-acid chain: Large ribosomal subunit protein uL4 (206 aa).

Positions 47–76 are disordered; that stretch reads GTQSAKTRAEVSGGGIKPWRQKGTGRARQG.

It belongs to the universal ribosomal protein uL4 family. In terms of assembly, part of the 50S ribosomal subunit.

Its function is as follows. One of the primary rRNA binding proteins, this protein initially binds near the 5'-end of the 23S rRNA. It is important during the early stages of 50S assembly. It makes multiple contacts with different domains of the 23S rRNA in the assembled 50S subunit and ribosome. Functionally, forms part of the polypeptide exit tunnel. The protein is Large ribosomal subunit protein uL4 of Clostridium botulinum (strain Okra / Type B1).